Consider the following 1050-residue polypeptide: RecBCD enzyme subunit RecB (1050 aa).

In terms of domain architecture, UvrD-like helicase ATP-binding spans 1-443 (MKPFNIFDSN…LQLVNNYRST (443 aa)). The DNA-binding and helicase activity, interacts with RecC stretch occupies residues 1-766 (MKPFNIFDSN…TNYVKLEGTQ (766 aa)). 21–28 (ASAGTGKT) contacts ATP. A UvrD-like helicase C-terminal domain is found at 458 to 701 (SPFLEIPGYL…KITTIHSSKG (244 aa)). The tract at residues 814–1050 (PKTIFSFSST…KAIQKCQAYH (237 aa)) is nuclease activity, interacts with RecD and RecA. Positions 859, 945, and 958 each coordinate Mg(2+). Catalysis depends on D958, which acts as the For nuclease activity.

It belongs to the helicase family. UvrD subfamily. Heterotrimer of RecB, RecC and RecD. All subunits contribute to DNA-binding. Interacts with RecA. Mg(2+) is required as a cofactor.

The enzyme catalyses Exonucleolytic cleavage (in the presence of ATP) in either 5'- to 3'- or 3'- to 5'-direction to yield 5'-phosphooligonucleotides.. It catalyses the reaction Couples ATP hydrolysis with the unwinding of duplex DNA by translocating in the 3'-5' direction.. It carries out the reaction ATP + H2O = ADP + phosphate + H(+). Its function is as follows. A helicase/nuclease that prepares dsDNA breaks (DSB) for recombinational DNA repair. Binds to DSBs and unwinds DNA via a highly rapid and processive ATP-dependent bidirectional helicase activity. Unwinds dsDNA until it encounters a Chi (crossover hotspot instigator) sequence from the 3' direction. Cuts ssDNA a few nucleotides 3' to the Chi site. The properties and activities of the enzyme are changed at Chi. The Chi-altered holoenzyme produces a long 3'-ssDNA overhang and facilitates RecA-binding to the ssDNA for homologous DNA recombination and repair. Holoenzyme degrades any linearized DNA that is unable to undergo homologous recombination. In the holoenzyme this subunit contributes ATPase, 3'-5' helicase, exonuclease activity and loads RecA onto ssDNA. This chain is RecBCD enzyme subunit RecB, found in Chlamydia pneumoniae (Chlamydophila pneumoniae).